Here is a 469-residue protein sequence, read N- to C-terminus: MYLSLRLVSLALCIAPLASAGNNSTPLVQACTGYSFPRVACMYRYASKMPLDFYRKASVDISNVDTYSSTEVANDDSFQQVGKATFLVWDQQRGSEILGSDPAYDIVFTISTGGHEAPVYVPDTNELWFSELGKGELHQQVISLDGDSPTISEVLTDPPLYAPSGARYRNGKIYFSAGGGNSTLEGGPYHPGIYSVDPKTRKSTIEVNNYFGWYFNQVSMPTAHTRGGSPLSHFCTLVDPRLVAHGLTFQHRPTTWILTNTVASGLVILVSSWTRDLTLVHTDAAIVLARNHGTSTVAPQVQASVYRYDPETGAVNIVDDTLHCPNGVAFSPDYKTLYLTDTDAGVPMIDPRVPLSEVPSLQYNSTNRRTVYAFDVSEDGSYLKNRRPIYTAKDFVPDGLKVASNGYVITGAGKGVDILDTTGTPLLSIQTNFTAVNMVFGGKNLDELWIVGHGAVARARLNLTGPALE.

An N-terminal signal peptide occupies residues 1–20; that stretch reads MYLSLRLVSLALCIAPLASA.

The protein belongs to the SMP-30/CGR1 family.

The protein operates within secondary metabolite biosynthesis. Lactonohydrolase; part of the gene cluster that mediates the biosynthesis of oryzines, natural products with an unusual maleidride backbone. The two subunits of the fungal fatty acid synthase oryfasA and oryfasB probably form octenoic acid. This fatty acid is most likely activated by the acyl-CoA ligase oryP to give octenyl-CoA before the citrate synthase-like protein oryE catalyzes condensation with oxaloacetate to form tricarboxylic acid. The next steps of the pathways are conjectural, but a favorite possible route has been proposed, beginning with decarboxylation and concomitant dehydration by the decarboxylase oryM, followed by tautomerization, which may lead to the production of a diene intermediate. Reduction of this diene intermediate could give the known metabolite piliformic acid. On the pathway to oryzine B and oryzine A, however, hydroxylation of the diene by the alpha-ketoglutarate-dependent dioxygenase oryG and lactonisation by the lactonohydrolases oryH or oryL could give oryzine B directly. Finally, enoyl reduction by the dehydrogenase oryD would then convert oryzine B into oryzine A. In Aspergillus oryzae (strain ATCC 42149 / RIB 40) (Yellow koji mold), this protein is Lactonohydrolase oryH.